The sequence spans 792 residues: Starch synthase 2, chloroplastic/amyloplastic (792 aa).

The N-terminal 55 residues, 1-55, are a transit peptide targeting the chloroplast; sequence MASVAESSFPLLCQIKTQRRINSSTLRHSRVSYHDLPSGSLSFRSRSFVLGHRCK. The disordered stretch occupies residues 105–295; the sequence is IKESTPDLDD…GKDEEKPPPL (191 aa). Residues 145–156 are compositionally biased toward polar residues; sequence GSVSPSTYGKSS. The span at 179 to 192 shows a compositional bias: low complexity; that stretch reads SSASVISSSPVTSP. Residues 221–233 show a composition bias toward polar residues; it reads SVMTSPEKTSDPV. A compositionally biased stretch (basic and acidic residues) spans 266–275; the sequence is KTEKYVEKTP. K315 serves as a coordination point for ADP-alpha-D-glucose.

This sequence belongs to the glycosyltransferase 1 family. Bacterial/plant glycogen synthase subfamily. As to expression, expressed in roots, leaves and flowers.

Its subcellular location is the plastid. The protein resides in the chloroplast. It is found in the amyloplast. It catalyses the reaction [(1-&gt;4)-alpha-D-glucosyl](n) + ADP-alpha-D-glucose = [(1-&gt;4)-alpha-D-glucosyl](n+1) + ADP + H(+). Its pathway is glycan biosynthesis; starch biosynthesis. Functionally, involved in the synthesis of glycan chains within amylopectin in leaves. Is required to produce chains with a degree of polymerization of 12 to 25 (DP12-DP25). The sequence is that of Starch synthase 2, chloroplastic/amyloplastic (SS2) from Arabidopsis thaliana (Mouse-ear cress).